We begin with the raw amino-acid sequence, 421 residues long: MILIKNGRVIDPKSQRDENIDLIIKENKIYKIGKFDESDEYEKIIDASGNVVAPGLVDVHVHFRDPGFTYKEDIESGAKSAARGGFTTVICMANTNPIVDNEDTFNYVKEKSKNACINVLQAAAITKGFEGKELVDMEALKKAGVPGFTDDGLPLMDSNLIMEAMIKAKELDVPLSFHEEDPSLVGNPGVNAGKVASELGLKGASSVAEDVMVARDCMLALKTGAKVDIQHISSGVSVDMVRFAKYLGATVVAEASPHHFTLTEEDVLEFGTNAKMNPPLRSKWDRDKIIEGLNDGTIEIIATDHAPHSKEEKDREFIKAPSGIIGLETSLALGITNLVHKNHLSMMQLIEKMSINPAKLYNLNIGFIEEGAVADIVIFNPEEEWTVESFVSKADNSPFKGKSLYGKVNYTICNGEIVYNA.

The Zn(2+) site is built by His60 and His62. Residues His62–Arg64 and Asn94 contribute to the substrate site. Positions 151, 178, and 231 each coordinate Zn(2+). Asn277 contributes to the substrate binding site. Residue Asp304 coordinates Zn(2+). The active site involves Asp304. Substrate is bound at residue His308.

It belongs to the metallo-dependent hydrolases superfamily. DHOase family. Class I DHOase subfamily. The cofactor is Zn(2+).

The catalysed reaction is (S)-dihydroorotate + H2O = N-carbamoyl-L-aspartate + H(+). It participates in pyrimidine metabolism; UMP biosynthesis via de novo pathway; (S)-dihydroorotate from bicarbonate: step 3/3. Catalyzes the reversible cyclization of carbamoyl aspartate to dihydroorotate. The protein is Dihydroorotase of Clostridioides difficile (strain 630) (Peptoclostridium difficile).